The chain runs to 465 residues: Midnolin (465 aa).

The Ubiquitin-like domain occupies methionine 32–glycine 106. Disordered stretches follow at residues serine 185–proline 262 and arginine 400–phenylalanine 445. 2 stretches are compositionally biased toward low complexity: residues arginine 195 to valine 219 and serine 240 to proline 257. Residues glutamine 397 to serine 424 are required for nucleolar localization.

Interacts with GCK; the interaction occurs preferentially at low glucose levels. Interacts with the proteasome. As to expression, expressed at high levels in brain and liver with significantly lower levels in muscle.

The protein resides in the nucleus. Its subcellular location is the cytoplasm. It localises to the cytosol. The protein localises to the nucleolus. Functionally, facilitates the ubiquitin-independent proteasomal degradation of stimulus-induced transcription factors such as FOSB, EGR1, NR4A1, and IRF4 to the proteasome for degradation. Promotes also the degradation of other substrates such as CBX4. Plays a role in inhibiting the activity of glucokinase GCK and both glucose-induced and basal insulin secretion. This is Midnolin (Midn) from Mus musculus (Mouse).